The primary structure comprises 418 residues: tRNA wybutosine-synthesizing protein 2 (418 aa).

S-adenosyl-L-methionine contacts are provided by residues Ser-228, Lys-235, 275 to 276, and 302 to 303; these read EI and EN.

Belongs to the class I-like SAM-binding methyltransferase superfamily. TRM5/TYW2 family.

Its subcellular location is the cytoplasm. The protein localises to the nucleus. It carries out the reaction 4-demethylwyosine(37) in tRNA(Phe) + S-adenosyl-L-methionine = 4-demethyl-7-[(3S)-3-amino-3-carboxypropyl]wyosine(37) in tRNA(Phe) + S-methyl-5'-thioadenosine + H(+). It participates in tRNA modification; wybutosine-tRNA(Phe) biosynthesis. In terms of biological role, S-adenosyl-L-methionine-dependent transferase that acts as a component of the wybutosine biosynthesis pathway. Wybutosine is a hyper modified guanosine with a tricyclic base found at the 3'-position adjacent to the anticodon of eukaryotic phenylalanine tRNA. Catalyzes the transfer of the alpha-amino-alpha-carboxypropyl (acp) group from S-adenosyl-L-methionine to the C-7 position of 4-demethylwyosine (imG-14) to produce wybutosine-86. This is tRNA wybutosine-synthesizing protein 2 (trm12) from Schizosaccharomyces pombe (strain 972 / ATCC 24843) (Fission yeast).